Consider the following 137-residue polypeptide: Large ribosomal subunit protein uL16 (137 aa).

Residues 1–13 are compositionally biased toward basic residues; sequence MLQPKRRKYRKEQ. The interval 1-22 is disordered; that stretch reads MLQPKRRKYRKEQKGRNTGVAT.

This sequence belongs to the universal ribosomal protein uL16 family. As to quaternary structure, part of the 50S ribosomal subunit.

Functionally, binds 23S rRNA and is also seen to make contacts with the A and possibly P site tRNAs. This is Large ribosomal subunit protein uL16 from Polynucleobacter asymbioticus (strain DSM 18221 / CIP 109841 / QLW-P1DMWA-1) (Polynucleobacter necessarius subsp. asymbioticus).